Here is an 884-residue protein sequence, read N- to C-terminus: MFPALSGAAIRQTFLDFYAQRGHQVLPSASLVPEDPTVLLTIAGMLPFKPIFLGQRDPEYPRVTTAQKCVRTNDIENVGRTARHHTFFEMLGNFSFGDYFKKEAIAWAWELVTEVFGLPPERLVVSVFREDEEAFALWRDEIGIPAHRIQRMGEADNFWAAGPTGPCGPCSEIYYDFKPELGDERIDLEDDSRFLEIYNLVFMELNRDSEGHLMPLAKQNIDTGLGLERLAQVLQGVPNNYETDLIFPIIQTAAGIAGLNYSKANPEQQISLKVIGDHARAVMHLIADGVLPSNVDRGYVLRRLIRRMVRHGRLLGIGEPFTIPVIETAIQLAEAAYPQVRERETLIKTELQREEEQFLKTLERGERLLLDLFTAVESSRRDSSSPKQISGADAFKLFDTYGFPLELTQEIAQEHGFSVDLEGFEQEMEKQRQRARAAHQTIDLTAQGSLDELADFLSQTEFLGYSQSSARGVVEALLVEGKSVPQVEAGQAVQVVLDRTPFYAEAGGQIGDRGYLSGDGLLVRIEDVQKQGDLFVHFGRVERGILRVGDPVQAQIDLACRRRAQAHHTATHLLQAALKRIVDPSIGQAGSLVAFDRLRFDFTLSRPVTPEELEQIENLVNTWIAEAHAAQVAIMPLAEAKARGAVAMFGEKYGAEVRVIDFPGVSMELCGGTHVNNTAEIGLFKIIAETGVAAGIRRIEAVAGPAVLEYLNERDRVVRELSAQFKAKPQELPERVAALQAELKAAQKELEEVRSQLALLQAEGLLAQAVAVADLKVLVAELGSTTPEALKTAAEHLLHKLGEGAVVLGSVPEAGKVSLVAAFSPAVQQLGLKAGSFIGEIAKLTGGGGGGRPNLAQAGGKQPEKLAEALQVARERLQAELISR.

4 residues coordinate Zn(2+): His-568, His-572, Cys-670, and His-674.

This sequence belongs to the class-II aminoacyl-tRNA synthetase family. Zn(2+) is required as a cofactor.

The protein localises to the cytoplasm. It carries out the reaction tRNA(Ala) + L-alanine + ATP = L-alanyl-tRNA(Ala) + AMP + diphosphate. Catalyzes the attachment of alanine to tRNA(Ala) in a two-step reaction: alanine is first activated by ATP to form Ala-AMP and then transferred to the acceptor end of tRNA(Ala). Also edits incorrectly charged Ser-tRNA(Ala) and Gly-tRNA(Ala) via its editing domain. The polypeptide is Alanine--tRNA ligase (Synechococcus sp. (strain JA-2-3B'a(2-13)) (Cyanobacteria bacterium Yellowstone B-Prime)).